A 335-amino-acid polypeptide reads, in one-letter code: Large ribosomal subunit protein uL3 (335 aa).

The interval 1-20 is disordered; the sequence is MATIHRPRRGSLAFSPRKRA.

It belongs to the universal ribosomal protein uL3 family. Part of the 50S ribosomal subunit. Forms a cluster with proteins L14 and L24e.

Its function is as follows. One of the primary rRNA binding proteins, it binds directly near the 3'-end of the 23S rRNA, where it nucleates assembly of the 50S subunit. This is Large ribosomal subunit protein uL3 from Methanothrix thermoacetophila (strain DSM 6194 / JCM 14653 / NBRC 101360 / PT) (Methanosaeta thermophila).